The primary structure comprises 781 residues: Cytosolic phospholipase A2 beta (781 aa).

Residues 1–112 enclose the C2 domain; sequence MAVAEVSRTC…RAGEFRRESF (112 aa). Ca(2+) is bound by residues Asp-26, Asp-32, Asp-82, Asp-84, and Asp-90. A PLA2c domain is found at 246–781; sequence EAGLRELAVR…VQRRRQRRPH (536 aa). Residue Ser-335 is the Nucleophile of the active site. Residue Asp-615 is the Proton acceptor of the active site.

Ca(2+) serves as cofactor. As to expression, widely expressed. Expressed at higher level in brain, heart, liver, cerebellum and pancreas.

The protein localises to the cytoplasm. It localises to the cytosol. Its subcellular location is the mitochondrion membrane. It is found in the early endosome membrane. It catalyses the reaction a 1,2-diacyl-sn-glycero-3-phosphocholine + H2O = a 1-acyl-sn-glycero-3-phosphocholine + a fatty acid + H(+). The enzyme catalyses a 1-acyl-sn-glycero-3-phosphocholine + H2O = sn-glycerol 3-phosphocholine + a fatty acid + H(+). It carries out the reaction 1-hexadecanoyl-2-(9Z,12Z-octadecadienoyl)-sn-glycero-3-phosphoethanolamine + H2O = 1-hexadecanoyl-sn-glycero-3-phosphoethanolamine + (9Z,12Z)-octadecadienoate + H(+). The catalysed reaction is 1-hexadecanoyl-2-(5Z,8Z,11Z,14Z-eicosatetraenoyl)-sn-glycero-3-phosphoethanolamine + H2O = 1-hexadecanoyl-sn-glycero-3-phosphoethanolamine + (5Z,8Z,11Z,14Z)-eicosatetraenoate + H(+). It catalyses the reaction 1-hexadecanoyl-sn-glycero-3-phosphocholine + H2O = sn-glycerol 3-phosphocholine + hexadecanoate + H(+). The enzyme catalyses 1-hexadecanoyl-2-(5Z,8Z,11Z,14Z-eicosatetraenoyl)-sn-glycero-3-phosphocholine + H2O = 1-hexadecanoyl-sn-glycero-3-phosphocholine + (5Z,8Z,11Z,14Z)-eicosatetraenoate + H(+). It carries out the reaction 1-hexadecanoyl-2-(5Z,8Z,11Z,14Z-eicosatetraenoyl)-sn-glycero-3-phosphocholine + H2O = 2-(5Z,8Z,11Z,14Z)-eicosatetraenoyl-sn-glycero-3-phosphocholine + hexadecanoate + H(+). With respect to regulation, stimulated by cytosolic Ca(2+). Calcium-dependent phospholipase A1 and A2 and lysophospholipase that may play a role in membrane phospholipid remodeling. In terms of biological role, calcium-dependent phospholipase A2 and lysophospholipase. Cleaves the ester bond of the fatty acyl group attached to the sn-2 position of phosphatidylethanolamines, producing lysophospholipids that may be used in deacylation-reacylation cycles. Hydrolyzes lysophosphatidylcholines with low efficiency but is inefficient toward phosphatidylcholines. Its function is as follows. Calcium-dependent phospholipase A1 and A2 and lysophospholipase. Cleaves the ester bond of the fatty acyl group attached to the sn-1 or sn-2 position of diacyl phospholipids (phospholipase A1 and A2 activity, respectively), producing lysophospholipids that may be used in deacylation-reacylation cycles. Can further hydrolyze lysophospholipids enabling complete deacylation. Has no activity toward alkylacyl phospholipids. The polypeptide is Cytosolic phospholipase A2 beta (PLA2G4B) (Homo sapiens (Human)).